A 615-amino-acid chain; its full sequence is Leucine aminopeptidase 2-1 (615 aa).

Substrate-binding positions include Gln137–Gln139 and Pro261–Glu266. A Zn(2+)-binding site is contributed by His290. Glu291 functions as the Proton acceptor in the catalytic mechanism. Zn(2+) contacts are provided by His294 and Glu313. Tyr380 (proton donor) is an active-site residue.

Belongs to the peptidase M1 family. Zn(2+) is required as a cofactor.

The protein localises to the cytoplasm. It is found in the nucleus. It catalyses the reaction an epoxide + H2O = an ethanediol. Its function is as follows. Aminopeptidase that preferentially cleaves di- and tripeptides. Also has low epoxide hydrolase activity (in vitro). Can hydrolyze the epoxide leukotriene LTA(4) but it forms preferentially 5,6-dihydroxy-7,9,11,14-eicosatetraenoic acid rather than the cytokine leukotriene B(4) as the product compared to the homologous mammalian enzyme (in vitro). This Meyerozyma guilliermondii (strain ATCC 6260 / CBS 566 / DSM 6381 / JCM 1539 / NBRC 10279 / NRRL Y-324) (Yeast) protein is Leucine aminopeptidase 2-1.